Consider the following 441-residue polypeptide: MSEVVTAAPAPPVVRLPPAVRGPKLFQGLAFVVSRRRLLGRFVRRYGKAFTANILMYGRVVVVADPQLARQVFTSSPEELGNIQPNLSRMFGSGSVFALDGDDHRRRRRLLAPPFHGKSMKNYETIIEEETLRETANWPQGQAFATLPSMMHITLNAILRAIFGAGGSELDELRRLIPPWVTLGSRLAALPKPKRDYGRLSPWGRLAEWRRQYDTVIDKLIEAERADPNFADRTDVLALMLRSTYDDGSIMSRKDIGDELLTLLAAGHETTAATLGWAFERLSRHPDVLAALVEEVDNGGHELRQAAILEVQRARTVIDFAARRVNPPVYQLGEWVIPRGYSIIINIAQIHGDPDVFPQPDRFDPQRYIGSKPSPFAWIPFGGGTRRCVGAAFANMEMDVVLRTVLRHFTLETTTAAGERSHGRGVAFTPKDGGRVVMRRR.

C388 lines the heme pocket.

It belongs to the cytochrome P450 family. It depends on heme as a cofactor.

The chain is Putative cytochrome P450 138 (cyp138) from Mycobacterium bovis (strain ATCC BAA-935 / AF2122/97).